Reading from the N-terminus, the 237-residue chain is BTB/POZ domain-containing protein KCTD6 (237 aa).

An interaction with ANK1 isoform Mu17 region spans residues 1–104 (MDNGDWGYMM…FYQIEPLIQC (104 aa)). An interaction with CUL3 region spans residues 10–110 (MTDPVTLNVG…LIQCLNDPKP (101 aa)). A BTB domain is found at 12 to 81 (DPVTLNVGGH…LRTSELTLPL (70 aa)). Positions 113 to 187 (PMDTFEEVVE…TFGPCDYHQE (75 aa)) are interaction with USP21.

Homopentamer. Interacts with KCTD11; KCTD6 and KCTD11 may associate in pentameric assemblies. Interacts (via BTB domain) with CUL3; initially a 4:4 stoichiometry has been reported, however, electron microscopy revealed pentameric states with a five-pointed pinwheel shape. The interaction with CUL3 is indicative for a participation in a BCR (BTB-CUL3-RBX1) E3 ubiquitin-protein ligase complex. Interacts with HDAC1; probably indirect as the interaction is requires the presence of KCTD11. Interacts with USP21 (preferentially catalytic inactive form). Interacts with ANK1 isoform Mu17; detected in striated muscle. Interacts with USP11. As to expression, highly expressed in cerebellum and brain. Expression is down-regulated in medulloblastoma.

It is found in the cytoplasm. It localises to the myofibril. The protein resides in the sarcomere. The protein localises to the m line. It functions in the pathway protein modification; protein ubiquitination. In terms of biological role, probable substrate-specific adapter of a BCR (BTB-CUL3-RBX1) E3 ubiquitin-protein ligase complex mediating the ubiquitination and subsequent proteasomal degradation of target proteins. Promotes the ubiquitination of HDAC1; the function seems to depend on KCTD11:KCTD6 oligomerization. Can function as antagonist of the Hedgehog pathway by affecting the nuclear transfer of transcription factor GLI1; the function probably occurs via HDAC1 down-regulation, keeping GLI1 acetylated and inactive. Inhibits cell growth and tumorigenicity of medulloblastoma (MDB). Involved in regulating protein levels of ANK1 isoform Mu17 probably implicating CUL3-dependent proteasomal degradation. The protein is BTB/POZ domain-containing protein KCTD6 (KCTD6) of Homo sapiens (Human).